Reading from the N-terminus, the 483-residue chain is GDP-fucose protein O-fucosyltransferase 4 (483 aa).

Residue Met-1 is a topological domain, cytoplasmic. The chain crosses the membrane as a helical; Signal-anchor for type II membrane protein span at residues Ala-2–Val-21. The Lumenal portion of the chain corresponds to Asp-22–Arg-483. N-linked (GlcNAc...) asparagine glycans are attached at residues Asn-151 and Asn-303. Cys-374 and Cys-377 are oxidised to a cystine. Positions Arg-387–Val-425 are disordered. Asn-406, Asn-428, Asn-456, and Asn-480 each carry an N-linked (GlcNAc...) asparagine glycan.

It belongs to the glycosyltransferase 10 family.

Its subcellular location is the endoplasmic reticulum membrane. It carries out the reaction L-threonyl-[protein] + GDP-beta-L-fucose = 3-O-(alpha-L-fucosyl)-L-threonyl-[protein] + GDP + H(+). The catalysed reaction is L-seryl-[protein] + GDP-beta-L-fucose = 3-O-(alpha-L-fucosyl)-L-seryl-[protein] + GDP + H(+). The protein operates within protein modification; protein glycosylation. In terms of biological role, protein O-fucosyltransferase that specifically catalyzes O-fucosylation of serine or threonine residues in EMI domains of target proteins. Attaches fucose through an O-glycosidic linkage. O-fucosylation of EMI domain-containing proteins may be required for facilitating protein folding and secretion. This Danio rerio (Zebrafish) protein is GDP-fucose protein O-fucosyltransferase 4 (fut11).